Consider the following 132-residue polypeptide: Small ribosomal subunit protein uS9 (132 aa).

This sequence belongs to the universal ribosomal protein uS9 family.

This chain is Small ribosomal subunit protein uS9 (rps9), found in Thermoplasma volcanium (strain ATCC 51530 / DSM 4299 / JCM 9571 / NBRC 15438 / GSS1).